An 878-amino-acid polypeptide reads, in one-letter code: METSSSLPLSPISIEPEQPSHRDYDITTRRGVGTTGNPIELCTNHFNVSVRQPDVVFYQYTVSITTENGDAVDGTGISRKLMDQLFKTYSSDLDGKRLAYDGEKTLYTVGPLPQNEFDFLVIVEGSFSKRDCGVSDGGSSSGTCKRSKRSFLPRSYKVQIHYAAEIPLKTVLGTQRGAYTPDKSAQDALRVLDIVLRQQAAERGCLLVRQAFFHSDGHPMKVGGGVIGIRGLHSSFRPTHGGLSLNIDVSTTMILEPGPVIEFLKANQSVETPRQIDWIKAAKMLKHMRVKATHRNMEFKIIGLSSKPCNQQLFSMKIKDGEREVPIREITVYDYFKQTYTEPISSAYFPCLDVGKPDRPNYLPLEFCNLVSLQRYTKPLSGRQRVLLVESSRQKPLERIKTLNDAMHTYCYDKDPFLAGCGISIEKEMTQVEGRVLKPPMLKFGKNEDFQPCNGRWNFNNKMLLEPRAIKSWAIVNFSFPCDSSHISRELISCGMRKGIEIDRPFALVEEDPQYKKAGPVERVEKMIATMKLKFPDPPHFILCILPERKTSDIYGPWKKICLTEEGIHTQCICPIKISDQYLTNVLLKINSKLGGINSLLGIEYSYNIPLINKIPTLILGMDVSHGPPGRADVPSVAAVVGSKCWPLISRYRAAVRTQSPRLEMIDSLFQPIENTEKGDNGIMNELFVEFYRTSRARKPKQIIIFRDGVSESQFEQVLKIEVDQIIKAYQRLGESDVPKFTVIVAQKNHHTKLFQAKGPENVPAGTVVDTKIVHPTNYDFYMCAHAGKIGTSRPAHYHVLLDEIGFSPDDLQNLIHSLSYVNQRSTTATSIVAPVRYAHLAAAQVAQFTKFEGISEDGKVPELPRLHENVEGNMFFC.

The span at 1–17 shows a compositional bias: low complexity; it reads METSSSLPLSPISIEPE. Residues 1-25 are disordered; sequence METSSSLPLSPISIEPEQPSHRDYD. The region spanning 259 to 372 is the PAZ domain; it reads PVIEFLKANQ…LPLEFCNLVS (114 aa). The 311-residue stretch at 541 to 851 folds into the Piwi domain; it reads FILCILPERK…AAAQVAQFTK (311 aa).

This sequence belongs to the argonaute family. Ago subfamily. In terms of tissue distribution, expressed in roots, cotyledons and shoot meristematic region.

Its subcellular location is the nucleus. Involved in transcriptional gene silencing (TGS). Component of the RISC complex that associate with the small interfering RNA (siRNA) pathway involved in direct cytosine methylation at endogenous DNA repeats. Required for the accumulation of specific siRNAs derived from transgene and heterochromatin-related endogenous loci. Involved in RNA-directed DNA methylation (RdDM) at specific endogenous loci. Probably not required for the accumulation of siRNAs derived from transgene inverted repeats that induce post-transcriptional gene silencing (PTGS). Associates mainly with small RNAs of 24 nucleotide in length and preferentially recruits small RNAs with a 5' terminal adenosine. Targeted by turnip yellows virus (TuYV) protein P0 (via F-box-like domain) for probable proteasome degradation and thereby inactivating AGO6 function in RNA silencing. The sequence is that of Protein argonaute 6 (AGO6) from Arabidopsis thaliana (Mouse-ear cress).